The chain runs to 347 residues: MSLIDQLNQLEQEALAALDHAADLTALAEWKSAYLGKQGALSRLSRGLGALPAEERPAAGARFNAARATLEQALERAEAQLKRAARQHAFEADQVDVTLPGRAPAVGRLHPTTQMLRTIYTILGEMGFQVWESPEVETDEFNFQLLNMPPDHPARDMWDTFYVETASGEPTLLLRTHTSPGQIYAMRANAPNPVRAILPGKCYRYEQVTARHEMQFFQVEGIAIGERISFADLKGTLVAFAERLYGKGVKTRFRPSYFPFTEPSVEFDIECFLCGGAGCRVCKHSGWLEILGAGMIHPTVLRNGGYDPEKVSGFAFGMGPERMAMLRYGIDDIRWFFSGDERFLQQF.

Glutamate 262 contacts Mg(2+).

The protein belongs to the class-II aminoacyl-tRNA synthetase family. Phe-tRNA synthetase alpha subunit type 1 subfamily. In terms of assembly, tetramer of two alpha and two beta subunits. Mg(2+) serves as cofactor.

Its subcellular location is the cytoplasm. It carries out the reaction tRNA(Phe) + L-phenylalanine + ATP = L-phenylalanyl-tRNA(Phe) + AMP + diphosphate + H(+). The sequence is that of Phenylalanine--tRNA ligase alpha subunit from Roseiflexus castenholzii (strain DSM 13941 / HLO8).